A 180-amino-acid chain; its full sequence is Large ribosomal subunit protein uL5 (180 aa).

This sequence belongs to the universal ribosomal protein uL5 family. Part of the 50S ribosomal subunit; part of the 5S rRNA/L5/L18/L25 subcomplex. Contacts the 5S rRNA and the P site tRNA. Forms a bridge to the 30S subunit in the 70S ribosome.

In terms of biological role, this is one of the proteins that bind and probably mediate the attachment of the 5S RNA into the large ribosomal subunit, where it forms part of the central protuberance. In the 70S ribosome it contacts protein S13 of the 30S subunit (bridge B1b), connecting the 2 subunits; this bridge is implicated in subunit movement. Contacts the P site tRNA; the 5S rRNA and some of its associated proteins might help stabilize positioning of ribosome-bound tRNAs. The protein is Large ribosomal subunit protein uL5 of Cupriavidus necator (strain ATCC 17699 / DSM 428 / KCTC 22496 / NCIMB 10442 / H16 / Stanier 337) (Ralstonia eutropha).